Consider the following 151-residue polypeptide: Ribosome maturation factor RimP (151 aa).

It belongs to the RimP family.

Its subcellular location is the cytoplasm. In terms of biological role, required for maturation of 30S ribosomal subunits. The sequence is that of Ribosome maturation factor RimP from Shewanella denitrificans (strain OS217 / ATCC BAA-1090 / DSM 15013).